Here is a 572-residue protein sequence, read N- to C-terminus: MGKASKKSVAVAVAPAAVPAKGKGGKKREAEDEIEKAVSAKKQKAAAAPPAKAVPAPKADAKKAKKQPPPKKAASSSSGSSSEEDSSESEEEVKVQVKKTTKPVKQESSSDESSDESSDDEDAKPADPVANNGLKKGKPASSDSESDSDDEMDEDEKPAAPVKKTSVTAQKKKDDSDSSESESDESDSDEDVPTKSKAPAVAAKNDDSTDGSESESDSEDEDAAPKGAAKKESSSDEEDDSSEESSDDEPKQPQQKKAQEESSEESSEEDSDEEDEKLAKTPKKKTPAATKSQNDEPKTPASNQSQGTESATLFMGNLSFNLNQDQVKEFFQEVGEVISVRLATHEDGSSRGFGHVQFASSEEAKKALELHGCDLDGRPVRLDLAHERGAYTPHSRNDTGSFQKQNRGSSQSIFVKGFDSSLEESKIRESLEGHFADCGEITRVSVPMDRETGASKGIAYIDFKDQASFSKALELSGSDLGGYNLYVDEAKPKGDSRDGGGRRGGRSGDRFGGRSGDRFGGRSGGRFGGRDGGRRGGRGGRDGGRRGGRGGFQSRQSAGTASTGKKTTFGDE.

Disordered regions lie at residues 1-312 and 488-572; these read MGKA…ESAT and DEAK…FGDE. The span at 7–21 shows a compositional bias: low complexity; sequence KSVAVAVAPAAVPAK. A compositionally biased stretch (basic and acidic residues) spans 27–38; that stretch reads KREAEDEIEKAV. Composition is skewed to low complexity over residues 45–58 and 72–81; these read AAAAPPAKAVPAPK and KAASSSSGSS. 7 stretches are compositionally biased toward acidic residues: residues 82–91, 109–122, 144–156, 177–191, 208–222, 235–247, and 261–276; these read SEEDSSESEE, SSDESSDESSDDED, SESDSDDEMDEDE, DSSESESDESDSDED, STDGSESESDSEDED, SDEEDDSSEESSD, and ESSEESSEEDSDEEDE. Over residues 300-311 the composition is skewed to polar residues; that stretch reads PASNQSQGTESA. RRM domains follow at residues 311–387 and 411–492; these read ATLF…LAHE and QSIF…EAKP. Basic and acidic residues-rich tracts occupy residues 488–520 and 528–545; these read DEAKPKGDSRDGGGRRGGRSGDRFGGRSGDRFG and GGRDGGRRGGRGGRDGGR. A compositionally biased stretch (polar residues) spans 553-566; the sequence is QSRQSAGTASTGKK.

The protein localises to the nucleus. The protein resides in the nucleolus. Its function is as follows. Involved in pre-rRNA processing and ribosome assembly. The protein is Nucleolin 1 of Oryza sativa subsp. japonica (Rice).